Consider the following 404-residue polypeptide: Serine/threonine transporter SstT (404 aa).

A run of 9 helical transmembrane segments spans residues Ile-17–Ile-37, Phe-44–Ile-64, Ile-75–Ile-95, Ala-138–Leu-158, Ile-179–Val-199, Leu-212–Leu-232, Ile-287–Leu-307, Phe-319–Val-339, and Phe-354–Ile-374.

This sequence belongs to the dicarboxylate/amino acid:cation symporter (DAACS) (TC 2.A.23) family.

The protein localises to the cell membrane. The catalysed reaction is L-serine(in) + Na(+)(in) = L-serine(out) + Na(+)(out). It catalyses the reaction L-threonine(in) + Na(+)(in) = L-threonine(out) + Na(+)(out). In terms of biological role, involved in the import of serine and threonine into the cell, with the concomitant import of sodium (symport system). The protein is Serine/threonine transporter SstT of Streptococcus equi subsp. zooepidemicus (strain MGCS10565).